The following is a 180-amino-acid chain: Inner membrane-spanning protein YciB (180 aa).

5 consecutive transmembrane segments (helical) span residues 25 to 45 (QNATLYMLITSVICITLCYII), 49 to 69 (VSKLSIISTTVLLVSGSITLI), 76 to 96 (IKIKPTILYVIFGIIFLMSGI), 118 to 138 (ITLSYRTAAFFFFMAVVNEIV), and 150 to 170 (FKVFGIIPITFIFIVLQLPLL).

This sequence belongs to the YciB family.

Its subcellular location is the cell inner membrane. Its function is as follows. Plays a role in cell envelope biogenesis, maintenance of cell envelope integrity and membrane homeostasis. This Rickettsia akari (strain Hartford) protein is Inner membrane-spanning protein YciB.